A 443-amino-acid polypeptide reads, in one-letter code: Phosphoglucosamine mutase (443 aa).

Ser-100 acts as the Phosphoserine intermediate in catalysis. Mg(2+)-binding residues include Ser-100, Asp-239, Asp-241, and Asp-243. A Phosphoserine modification is found at Ser-100.

The protein belongs to the phosphohexose mutase family. The cofactor is Mg(2+). Activated by phosphorylation.

The enzyme catalyses alpha-D-glucosamine 1-phosphate = D-glucosamine 6-phosphate. In terms of biological role, catalyzes the conversion of glucosamine-6-phosphate to glucosamine-1-phosphate. The polypeptide is Phosphoglucosamine mutase (Shewanella sediminis (strain HAW-EB3)).